The following is a 371-amino-acid chain: 4-hydroxyphenylpyruvate dioxygenase-like protein (371 aa).

2 VOC domains span residues 7 to 135 (RLCH…LLQR) and 160 to 328 (HVDH…VFTK). Positions 163, 258, and 339 each coordinate Fe cation.

The protein belongs to the 4HPPD family. Requires Fe cation as cofactor.

It is found in the mitochondrion. The catalysed reaction is 3-(4-hydroxyphenyl)pyruvate + O2 = (S)-4-hydroxymandelate + CO2. Its function is as follows. Iron-dependent dioxygenase that catalyzes the conversion of 4-hydroxyphenylpyruvate (4-HPPA) to 4-hydroxymandelate (4-HMA) in the mitochondria, one of the steps in the biosynthesis of coenzyme Q10 from tyrosine. The chain is 4-hydroxyphenylpyruvate dioxygenase-like protein from Rattus norvegicus (Rat).